The sequence spans 173 residues: Ribosome maturation factor RimP (173 aa).

Belongs to the RimP family.

Its subcellular location is the cytoplasm. In terms of biological role, required for maturation of 30S ribosomal subunits. This chain is Ribosome maturation factor RimP, found in Pelodictyon phaeoclathratiforme (strain DSM 5477 / BU-1).